The following is a 353-amino-acid chain: Photosystem II protein D1 (353 aa).

An N-acetylthreonine modification is found at Thr-2. Residue Thr-2 is modified to Phosphothreonine. Transmembrane regions (helical) follow at residues 29–46 (YIGW…TATS), 118–133 (HFFL…EWEL), and 142–156 (WIAV…AATA). His-118 contributes to the chlorophyll a binding site. Tyr-126 contacts pheophytin a. [CaMn4O5] cluster is bound by residues Asp-170 and Glu-189. A helical transmembrane segment spans residues 197–218 (FHMLGVAGVFGGSLFSAMHGSL). Residue His-198 participates in chlorophyll a binding. A quinone is bound by residues His-215 and 264 to 265 (SF). Position 215 (His-215) interacts with Fe cation. His-272 provides a ligand contact to Fe cation. Residues 274–288 (FLAAWPVVGIWFTAL) traverse the membrane as a helical segment. Residues His-332, Glu-333, Asp-342, and Ala-344 each coordinate [CaMn4O5] cluster. The propeptide occupies 345–353 (SVEAPSVNA).

It belongs to the reaction center PufL/M/PsbA/D family. PSII is composed of 1 copy each of membrane proteins PsbA, PsbB, PsbC, PsbD, PsbE, PsbF, PsbH, PsbI, PsbJ, PsbK, PsbL, PsbM, PsbT, PsbX, PsbY, PsbZ, Psb30/Ycf12, at least 3 peripheral proteins of the oxygen-evolving complex and a large number of cofactors. It forms dimeric complexes. The cofactor is The D1/D2 heterodimer binds P680, chlorophylls that are the primary electron donor of PSII, and subsequent electron acceptors. It shares a non-heme iron and each subunit binds pheophytin, quinone, additional chlorophylls, carotenoids and lipids. D1 provides most of the ligands for the Mn4-Ca-O5 cluster of the oxygen-evolving complex (OEC). There is also a Cl(-1) ion associated with D1 and D2, which is required for oxygen evolution. The PSII complex binds additional chlorophylls, carotenoids and specific lipids.. In terms of processing, the 9 C-terminal residues are removed, probably by CTPA (AC O04073); processing is essential to allow assembly of the oxygen-evolving complex and thus photosynthetic growth. Tyr-161 forms a radical intermediate that is referred to as redox-active TyrZ, YZ or Y-Z.

It localises to the plastid. Its subcellular location is the chloroplast thylakoid membrane. It catalyses the reaction 2 a plastoquinone + 4 hnu + 2 H2O = 2 a plastoquinol + O2. Functionally, photosystem II (PSII) is a light-driven water:plastoquinone oxidoreductase that uses light energy to abstract electrons from H(2)O, generating O(2) and a proton gradient subsequently used for ATP formation. It consists of a core antenna complex that captures photons, and an electron transfer chain that converts photonic excitation into a charge separation. The D1/D2 (PsbA/PsbD) reaction center heterodimer binds P680, the primary electron donor of PSII as well as several subsequent electron acceptors. In Tetradesmus obliquus (Green alga), this protein is Photosystem II protein D1.